The chain runs to 200 residues: NAD(P)H dehydrogenase (quinone) (200 aa).

The Flavodoxin-like domain maps to 4–190 (VLVLYYSTYG…DGARFQGRLV (187 aa)). Residues 10–15 (STYGHL) and 78–80 (TRF) contribute to the FMN site. Tyr12 provides a ligand contact to NAD(+). A substrate-binding site is contributed by Trp98. FMN contacts are provided by residues 113-119 (STATQHG) and His134.

Belongs to the WrbA family. Requires FMN as cofactor.

The enzyme catalyses a quinone + NADH + H(+) = a quinol + NAD(+). It catalyses the reaction a quinone + NADPH + H(+) = a quinol + NADP(+). The sequence is that of NAD(P)H dehydrogenase (quinone) from Acidovorax ebreus (strain TPSY) (Diaphorobacter sp. (strain TPSY)).